The primary structure comprises 45 residues: Photosystem II reaction center protein K (45 aa).

The propeptide occupies 1–8 (MEAALLLA). A helical membrane pass occupies residues 24–44 (LPIIPVFFLLLAFVWQAAVGF).

The protein belongs to the PsbK family. PSII is composed of 1 copy each of membrane proteins PsbA, PsbB, PsbC, PsbD, PsbE, PsbF, PsbH, PsbI, PsbJ, PsbK, PsbL, PsbM, PsbT, PsbX, PsbY, PsbZ, Psb30/Ycf12, peripheral proteins PsbO, CyanoQ (PsbQ), PsbU, PsbV and a large number of cofactors. It forms dimeric complexes.

It localises to the cellular thylakoid membrane. Functionally, one of the components of the core complex of photosystem II (PSII). PSII is a light-driven water:plastoquinone oxidoreductase that uses light energy to abstract electrons from H(2)O, generating O(2) and a proton gradient subsequently used for ATP formation. It consists of a core antenna complex that captures photons, and an electron transfer chain that converts photonic excitation into a charge separation. This is Photosystem II reaction center protein K from Nostoc sp. (strain PCC 7120 / SAG 25.82 / UTEX 2576).